Here is a 57-residue protein sequence, read N- to C-terminus: MLGWVITFLVVALIAGILGFGGIAGASIEIAKIIFFIAVVLFLVSAVVGLARGRNRV.

2 helical membrane passes run 4 to 24 (WVIT…GGIA) and 30 to 50 (IAKI…VVGL).

Belongs to the UPF0391 family.

The protein localises to the cell membrane. The protein is UPF0391 membrane protein RPC_3278 of Rhodopseudomonas palustris (strain BisB18).